A 131-amino-acid polypeptide reads, in one-letter code: Ribonuclease VapC30 (131 aa).

A PINc domain is found at 1 to 129 (MVIDTSALVA…FQHTDIATVA (129 aa)). The Mg(2+) site is built by D4 and D99.

The protein belongs to the PINc/VapC protein family. The cofactor is Mg(2+).

In terms of biological role, toxic component of a type II toxin-antitoxin (TA) system. An RNase. Its toxic effect is neutralized by coexpression with cognate antitoxin VapB30. The polypeptide is Ribonuclease VapC30 (Mycobacterium tuberculosis (strain CDC 1551 / Oshkosh)).